The primary structure comprises 295 residues: 33 kDa chaperonin (295 aa).

2 disulfide bridges follow: Cys-230–Cys-232 and Cys-264–Cys-267.

The protein belongs to the HSP33 family. Under oxidizing conditions two disulfide bonds are formed involving the reactive cysteines. Under reducing conditions zinc is bound to the reactive cysteines and the protein is inactive.

The protein localises to the cytoplasm. Its function is as follows. Redox regulated molecular chaperone. Protects both thermally unfolding and oxidatively damaged proteins from irreversible aggregation. Plays an important role in the bacterial defense system toward oxidative stress. The sequence is that of 33 kDa chaperonin from Ectopseudomonas mendocina (strain ymp) (Pseudomonas mendocina).